The following is a 918-amino-acid chain: Protein translocase subunit SecA (918 aa).

ATP contacts are provided by residues Gln-87, 105–109 (GEGKT), and Asp-494. The span at 863 to 883 (KQDDTSPKEYKKIGQEQRAEV) shows a compositional bias: basic and acidic residues. A disordered region spans residues 863–918 (KQDDTSPKEYKKIGQEQRAEVDMFGNELKSNKTKPQVSSTTSSGGGSERRSSRRKK).

Belongs to the SecA family. Monomer and homodimer. Part of the essential Sec protein translocation apparatus which comprises SecA, SecYEG and auxiliary proteins SecDF. Other proteins may also be involved.

It is found in the cell inner membrane. The protein localises to the cytoplasm. The enzyme catalyses ATP + H2O + cellular proteinSide 1 = ADP + phosphate + cellular proteinSide 2.. Functionally, part of the Sec protein translocase complex. Interacts with the SecYEG preprotein conducting channel. Has a central role in coupling the hydrolysis of ATP to the transfer of proteins into and across the cell membrane, serving as an ATP-driven molecular motor driving the stepwise translocation of polypeptide chains across the membrane. The polypeptide is Protein translocase subunit SecA (Leptospira biflexa serovar Patoc (strain Patoc 1 / Ames)).